The sequence spans 426 residues: Serine/threonine-protein kinase ssn3 (426 aa).

The Protein kinase domain maps to 39–368 (YHIVGFISSG…AKEALEHPYF (330 aa)). ATP contacts are provided by residues 45 to 53 (ISSGTYGRV) and lysine 69. Catalysis depends on aspartate 171, which acts as the Proton acceptor. Residues 389 to 398 (RRITHDDNDI) show a composition bias toward basic and acidic residues. The disordered stretch occupies residues 389–426 (RRITHDDNDIRSGSLPGTKRSGLPDDSLMSRAAKRMKE).

The protein belongs to the protein kinase superfamily. CMGC Ser/Thr protein kinase family. CDC2/CDKX subfamily. As to quaternary structure, component of the srb8-11 complex, a regulatory module of the Mediator complex. It depends on Mg(2+) as a cofactor.

The protein resides in the nucleus. The enzyme catalyses L-seryl-[protein] + ATP = O-phospho-L-seryl-[protein] + ADP + H(+). The catalysed reaction is L-threonyl-[protein] + ATP = O-phospho-L-threonyl-[protein] + ADP + H(+). It carries out the reaction [DNA-directed RNA polymerase] + ATP = phospho-[DNA-directed RNA polymerase] + ADP + H(+). Functionally, component of the srb8-11 complex. The srb8-11 complex is a regulatory module of the Mediator complex which is itself involved in regulation of basal and activated RNA polymerase II-dependent transcription. The srb8-11 complex may be involved in the transcriptional repression of a subset of genes regulated by Mediator. It may inhibit the association of the Mediator complex with RNA polymerase II to form the holoenzyme complex. The srb8-11 complex phosphorylates the C-terminal domain (CTD) of the largest subunit of RNA polymerase II. This chain is Serine/threonine-protein kinase ssn3 (ssn3), found in Emericella nidulans (strain FGSC A4 / ATCC 38163 / CBS 112.46 / NRRL 194 / M139) (Aspergillus nidulans).